Reading from the N-terminus, the 338-residue chain is Phosphate acyltransferase (338 aa).

It belongs to the PlsX family. As to quaternary structure, homodimer. Probably interacts with PlsY.

The protein localises to the cytoplasm. It carries out the reaction a fatty acyl-[ACP] + phosphate = an acyl phosphate + holo-[ACP]. It participates in lipid metabolism; phospholipid metabolism. Its function is as follows. Catalyzes the reversible formation of acyl-phosphate (acyl-PO(4)) from acyl-[acyl-carrier-protein] (acyl-ACP). This enzyme utilizes acyl-ACP as fatty acyl donor, but not acyl-CoA. This Endomicrobium trichonymphae protein is Phosphate acyltransferase.